Consider the following 316-residue polypeptide: ATP synthase gamma chain (316 aa).

Belongs to the ATPase gamma chain family. As to quaternary structure, F-type ATPases have 2 components, CF(1) - the catalytic core - and CF(0) - the membrane proton channel. CF(1) has five subunits: alpha(3), beta(3), gamma(1), delta(1), epsilon(1). CF(0) has three main subunits: a, b and c.

It localises to the cellular thylakoid membrane. In terms of biological role, produces ATP from ADP in the presence of a proton gradient across the membrane. The gamma chain is believed to be important in regulating ATPase activity and the flow of protons through the CF(0) complex. The sequence is that of ATP synthase gamma chain from Synechococcus elongatus (strain ATCC 33912 / PCC 7942 / FACHB-805) (Anacystis nidulans R2).